The chain runs to 106 residues: Small ribosomal subunit protein uS10 (106 aa).

Belongs to the universal ribosomal protein uS10 family. Part of the 30S ribosomal subunit.

Functionally, involved in the binding of tRNA to the ribosomes. The sequence is that of Small ribosomal subunit protein uS10 from Caldicellulosiruptor saccharolyticus (strain ATCC 43494 / DSM 8903 / Tp8T 6331).